The following is a 500-amino-acid chain: Lysine--tRNA ligase (500 aa).

Mg(2+) is bound by residues E410 and E417.

This sequence belongs to the class-II aminoacyl-tRNA synthetase family. In terms of assembly, homodimer. The cofactor is Mg(2+).

The protein resides in the cytoplasm. The enzyme catalyses tRNA(Lys) + L-lysine + ATP = L-lysyl-tRNA(Lys) + AMP + diphosphate. The sequence is that of Lysine--tRNA ligase from Mycoplasma capricolum subsp. capricolum (strain California kid / ATCC 27343 / NCTC 10154).